A 149-amino-acid polypeptide reads, in one-letter code: Ribonuclease pancreatic (149 aa).

A signal peptide spans 1–25 (MGLEKSFILFSLLVLVLGWVQPSLS). The span at 30–40 (ADKFKRQHMDT) shows a compositional bias: basic and acidic residues. The interval 30–49 (ADKFKRQHMDTEGSSNSSPT) is disordered. Residues K32 and R35 each contribute to the substrate site. Catalysis depends on H37, which acts as the Proton acceptor. 4 disulfide bridges follow: C51–C109, C65–C120, C83–C135, and C90–C97. A glycan (N-linked (GlcNAc...) asparagine) is linked at N62. 66 to 70 (KPVNT) contributes to the substrate binding site. N-linked (GlcNAc...) asparagine glycosylation occurs at N87. Substrate is bound by residues K91 and R110. The active-site Proton donor is the H144.

This sequence belongs to the pancreatic ribonuclease family. In terms of assembly, monomer. Interacts with and forms tight 1:1 complexes with RNH1. Dimerization of two such complexes may occur. Interaction with RNH1 inhibits this protein. In terms of tissue distribution, pancreas.

Its subcellular location is the secreted. It catalyses the reaction an [RNA] containing cytidine + H2O = an [RNA]-3'-cytidine-3'-phosphate + a 5'-hydroxy-ribonucleotide-3'-[RNA].. The enzyme catalyses an [RNA] containing uridine + H2O = an [RNA]-3'-uridine-3'-phosphate + a 5'-hydroxy-ribonucleotide-3'-[RNA].. Endonuclease that catalyzes the cleavage of RNA on the 3' side of pyrimidine nucleotides. Acts on single-stranded and double-stranded RNA. The chain is Ribonuclease pancreatic (RNASE1) from Niviventer cremoriventer (Dark-tailed tree rat).